A 378-amino-acid chain; its full sequence is D-alanine--D-alanine ligase (378 aa).

The ATP-grasp domain occupies 149–374 (KVLLRAAGIP…FRTVVTDLIE (226 aa)). 189 to 247 (EAGLQYPLFVKPSRAGSSFGVTKVEQIGDAAALAAAVFEASRHDWRVLVEQGIDAREIE) is a binding site for ATP. Mg(2+)-binding residues include D328, E341, and N343.

It belongs to the D-alanine--D-alanine ligase family. Requires Mg(2+) as cofactor. Mn(2+) is required as a cofactor.

The protein localises to the cytoplasm. It carries out the reaction 2 D-alanine + ATP = D-alanyl-D-alanine + ADP + phosphate + H(+). It participates in cell wall biogenesis; peptidoglycan biosynthesis. Its function is as follows. Cell wall formation. This Bifidobacterium animalis subsp. lactis (strain AD011) protein is D-alanine--D-alanine ligase.